The chain runs to 747 residues: Histone-lysine N-methyltransferase EZH1 (747 aa).

A disordered region spans residues 186–229 (YSDEDEEGHNDTSDGKQDDSKEDLPVTRKRKRHAIEGSKKSSKK). Positions 194 to 211 (HNDTSDGKQDDSKEDLPV) are enriched in basic and acidic residues. A Glycyl lysine isopeptide (Lys-Gly) (interchain with G-Cter in SUMO2) cross-link involves residue Lys327. Residues 375–421 (TSASAVAETKEGDSDRDTGNDWASSSSEANSRCQTPTKQKASPAPPQ) form a disordered region. Basic and acidic residues predominate over residues 382–393 (ETKEGDSDRDTG). A compositionally biased stretch (polar residues) spans 395–414 (DWASSSSEANSRCQTPTKQK). The 103-residue stretch at 504 to 606 (CRKIQLKKDN…CKVVSCKNCS (103 aa)) folds into the CXC domain. In terms of domain architecture, SET spans 613-728 (KHLLLAPSDV…AGEELFFDYR (116 aa)).

Belongs to the class V-like SAM-binding methyltransferase superfamily. Histone-lysine methyltransferase family. EZ subfamily. As to quaternary structure, component of the PRC2/EED-EZH1 complex, which includes EED, EZH1, SUZ12, RBBP4 and AEBP2. The PRC2/EED-EZH1 is less abundant than the PRC2/EED-EZH2 complex, has weak methyltransferase activity and compacts chromatin in the absence of the methyltransferase cofactor S-adenosyl-L-methionine (SAM). Interacts with EZHIP; the interaction blocks EZH1 methyltransferase activity.

The protein resides in the nucleus. It carries out the reaction L-lysyl(27)-[histone H3] + 3 S-adenosyl-L-methionine = N(6),N(6),N(6)-trimethyl-L-lysyl(27)-[histone H3] + 3 S-adenosyl-L-homocysteine + 3 H(+). Functionally, polycomb group (PcG) protein. Catalytic subunit of the PRC2/EED-EZH1 complex, which methylates 'Lys-27' of histone H3, leading to transcriptional repression of the affected target gene. Able to mono-, di- and trimethylate 'Lys-27' of histone H3 to form H3K27me1, H3K27me2 and H3K27me3, respectively. Required for embryonic stem cell derivation and self-renewal, suggesting that it is involved in safeguarding embryonic stem cell identity. Compared to EZH2-containing complexes, it is less abundant in embryonic stem cells, has weak methyltransferase activity and plays a less critical role in forming H3K27me3, which is required for embryonic stem cell identity and proper differentiation. This Bos taurus (Bovine) protein is Histone-lysine N-methyltransferase EZH1 (EZH1).